We begin with the raw amino-acid sequence, 232 residues long: 2-C-methyl-D-erythritol 4-phosphate cytidylyltransferase (232 aa).

Belongs to the IspD/TarI cytidylyltransferase family. IspD subfamily.

It carries out the reaction 2-C-methyl-D-erythritol 4-phosphate + CTP + H(+) = 4-CDP-2-C-methyl-D-erythritol + diphosphate. The protein operates within isoprenoid biosynthesis; isopentenyl diphosphate biosynthesis via DXP pathway; isopentenyl diphosphate from 1-deoxy-D-xylulose 5-phosphate: step 2/6. Catalyzes the formation of 4-diphosphocytidyl-2-C-methyl-D-erythritol from CTP and 2-C-methyl-D-erythritol 4-phosphate (MEP). This Stenotrophomonas maltophilia (strain K279a) protein is 2-C-methyl-D-erythritol 4-phosphate cytidylyltransferase.